Here is a 296-residue protein sequence, read N- to C-terminus: Class E basic helix-loop-helix protein 22 (296 aa).

Residues 26 to 70 (SAFRPPQGLDLSQPGDRSPLHCYDGPDPSDLLRHHQHHHQASSGA) form a disordered region. Residues 153–207 (TLRLNINARERRRMHDLNDALDELRAVIPYAHSPSVRKLSKIATLLLAKNYILMQ) enclose the bHLH domain.

Its subcellular location is the nucleus. Its function is as follows. May act as a transcriptional repressor. In Xenopus tropicalis (Western clawed frog), this protein is Class E basic helix-loop-helix protein 22 (bhlhe22).